A 77-amino-acid polypeptide reads, in one-letter code: Liver-expressed antimicrobial peptide 2 (77 aa).

Positions 1–22 (MWHLKLFAVLMICLLLLAQVDG) are cleaved as a signal peptide. Positions 23–37 (SPIPQQSSAKRRPRR) are excised as a propeptide. 2 cysteine pairs are disulfide-bonded: Cys-54–Cys-65 and Cys-60–Cys-70.

This sequence belongs to the LEAP2 family.

Its subcellular location is the secreted. Has an antimicrobial activity. This Bos taurus (Bovine) protein is Liver-expressed antimicrobial peptide 2 (LEAP2).